Reading from the N-terminus, the 406-residue chain is Testis-specific Y-encoded-like protein 5 (406 aa).

Residues 1–25 are compositionally biased toward basic residues; the sequence is MSGRSRGRKSSRAKGRGKGRARARV. Disordered regions lie at residues 1–67, 132–164, and 382–406; these read MSGR…PAEL, IGNR…PKMA, and RGEK…RQPN. Residues 27 to 38 are compositionally biased toward basic and acidic residues; it reads AAAEDAWHDEKP. Residues 49–62 are compositionally biased toward low complexity; that stretch reads AAAQVQAGAAQGGA. The span at 382-392 shows a compositional bias: basic and acidic residues; it reads RGEKGKEERPG.

The protein belongs to the nucleosome assembly protein (NAP) family. In terms of assembly, interacts with USP7.

In terms of biological role, involved in modulation of cell growth and cellular response to gamma radiation probably via regulation of the Akt signaling pathway. Involved in regulation of p53/TP53. Suppresses p53/TP53 protein levels and promotes its ubiquitination; the function is dependent on USP7 and independent on MDM2. Proposed to displace p53/TP53 from interaction with USP7. This chain is Testis-specific Y-encoded-like protein 5 (Tspyl5), found in Mus musculus (Mouse).